The chain runs to 474 residues: Ribulose bisphosphate carboxylase large chain (474 aa).

Residues Asn122 and Thr172 each coordinate substrate. Lys174 serves as the catalytic Proton acceptor. Lys176 provides a ligand contact to substrate. The Mg(2+) site is built by Lys200, Asp202, and Glu203. Lys200 carries the post-translational modification N6-carboxylysine. Catalysis depends on His293, which acts as the Proton acceptor. 3 residues coordinate substrate: Arg294, His326, and Ser378.

It belongs to the RuBisCO large chain family. Type I subfamily. Heterohexadecamer of 8 large chains and 8 small chains; disulfide-linked. The disulfide link is formed within the large subunit homodimers. Requires Mg(2+) as cofactor. Post-translationally, the disulfide bond which can form in the large chain dimeric partners within the hexadecamer appears to be associated with oxidative stress and protein turnover.

The protein localises to the carboxysome. It catalyses the reaction 2 (2R)-3-phosphoglycerate + 2 H(+) = D-ribulose 1,5-bisphosphate + CO2 + H2O. The catalysed reaction is D-ribulose 1,5-bisphosphate + O2 = 2-phosphoglycolate + (2R)-3-phosphoglycerate + 2 H(+). RuBisCO catalyzes two reactions: the carboxylation of D-ribulose 1,5-bisphosphate, the primary event in carbon dioxide fixation, as well as the oxidative fragmentation of the pentose substrate in the photorespiration process. Both reactions occur simultaneously and in competition at the same active site. The sequence is that of Ribulose bisphosphate carboxylase large chain from Synechococcus sp. (strain JA-2-3B'a(2-13)) (Cyanobacteria bacterium Yellowstone B-Prime).